Here is a 1427-residue protein sequence, read N- to C-terminus: DNA-directed RNA polymerase subunit beta' (1427 aa).

Zn(2+)-binding residues include C70, C72, C85, and C88. Mg(2+)-binding residues include D461, D463, and D465. Zn(2+) is bound by residues C838, C912, C919, and C922.

Belongs to the RNA polymerase beta' chain family. In terms of assembly, the RNAP catalytic core consists of 2 alpha, 1 beta, 1 beta' and 1 omega subunit. When a sigma factor is associated with the core the holoenzyme is formed, which can initiate transcription. It depends on Mg(2+) as a cofactor. The cofactor is Zn(2+).

It catalyses the reaction RNA(n) + a ribonucleoside 5'-triphosphate = RNA(n+1) + diphosphate. DNA-dependent RNA polymerase catalyzes the transcription of DNA into RNA using the four ribonucleoside triphosphates as substrates. The sequence is that of DNA-directed RNA polymerase subunit beta' from Sorangium cellulosum (strain So ce56) (Polyangium cellulosum (strain So ce56)).